The primary structure comprises 230 residues: Heptaprenylglyceryl phosphate synthase (230 aa).

K12 is a sn-glycerol 1-phosphate binding site. 2 residues coordinate Mg(2+): D14 and T40. Residues 159-164 (YIEYSG), G189, and 209-210 (GD) contribute to the sn-glycerol 1-phosphate site.

This sequence belongs to the GGGP/HepGP synthase family. Group I subfamily. In terms of assembly, homodimer. It depends on Mg(2+) as a cofactor.

It catalyses the reaction sn-glycerol 1-phosphate + all-trans-heptaprenyl diphosphate = 3-heptaprenyl-sn-glycero-1-phosphate + diphosphate. The protein operates within membrane lipid metabolism; glycerophospholipid metabolism. In terms of biological role, prenyltransferase that catalyzes in vivo the transfer of the heptaprenyl moiety of heptaprenyl pyrophosphate (HepPP; 35 carbon atoms) to the C3 hydroxyl of sn-glycerol-1-phosphate (G1P), producing heptaprenylglyceryl phosphate (HepGP). This reaction is an ether-bond-formation step in the biosynthesis of archaea-type G1P-based membrane lipids found in Bacillales. This Staphylococcus aureus (strain Mu3 / ATCC 700698) protein is Heptaprenylglyceryl phosphate synthase.